The primary structure comprises 173 residues: NADH-ubiquinone oxidoreductase chain 6 (173 aa).

A run of 5 helical transmembrane segments spans residues Met1 to Ser21, Tyr27 to Gly47, Val48 to Val68, Val87 to Leu107, and Cys139 to Leu159.

This sequence belongs to the complex I subunit 6 family. Core subunit of respiratory chain NADH dehydrogenase (Complex I) which is composed of 45 different subunits.

It localises to the mitochondrion inner membrane. The enzyme catalyses a ubiquinone + NADH + 5 H(+)(in) = a ubiquinol + NAD(+) + 4 H(+)(out). Core subunit of the mitochondrial membrane respiratory chain NADH dehydrogenase (Complex I) which catalyzes electron transfer from NADH through the respiratory chain, using ubiquinone as an electron acceptor. Essential for the catalytic activity and assembly of complex I. The protein is NADH-ubiquinone oxidoreductase chain 6 (MT-ND6) of Gallus gallus (Chicken).